The sequence spans 163 residues: Photosystem II extrinsic protein V (163 aa).

The signal sequence occupies residues 1–26 (MFRRLIGVVVATVLLSFQLLVGSATA). Heme c is bound by residues cysteine 63, cysteine 66, histidine 67, and histidine 118.

The protein belongs to the cytochrome c family. PsbV subfamily. PSII is composed of 1 copy each of membrane proteins PsbA, PsbB, PsbC, PsbD, PsbE, PsbF, PsbH, PsbI, PsbJ, PsbK, PsbL, PsbM, PsbT, PsbX, PsbY, PsbZ, Psb30/Ycf12, peripheral proteins PsbO, CyanoQ (PsbQ), PsbU, PsbV and a large number of cofactors. It forms dimeric complexes. Heme c is required as a cofactor.

The protein localises to the cellular thylakoid membrane. Functionally, one of the extrinsic, lumenal subunits of photosystem II (PSII). PSII is a light-driven water plastoquinone oxidoreductase, using light energy to abstract electrons from H(2)O, generating a proton gradient subsequently used for ATP formation. The extrinsic proteins stabilize the structure of photosystem II oxygen-evolving complex (OEC), the ion environment of oxygen evolution and protect the OEC against heat-induced inactivation. Low-potential cytochrome c that plays a role in the OEC of PSII. This is Photosystem II extrinsic protein V from Nostoc punctiforme (strain ATCC 29133 / PCC 73102).